Consider the following 537-residue polypeptide: 5,6-dihydroxyindole-2-carboxylic acid oxidase (537 aa).

Positions 1-24 are cleaved as a signal peptide; sequence MKSYNVLPLAYISLFLMLFYQVWA. The Lumenal, melanosome segment spans residues 25 to 477; it reads QFPRECANIE…WPGQEFTVSE (453 aa). 5 cysteine pairs are disulfide-bonded: C30/C41, C42/C65, C56/C99, C101/C110, and C113/C122. N-linked (GlcNAc...) asparagine glycans are attached at residues N96 and N104. N181 carries an N-linked (GlcNAc...) asparagine glycan. Residues H192, H215, and H224 each contribute to the Zn(2+) site. Cystine bridges form between C258/C261 and C290/C303. Residues N304 and N350 are each glycosylated (N-linked (GlcNAc...) asparagine). Zn(2+)-binding residues include H377 and H381. A glycan (N-linked (GlcNAc...) asparagine) is linked at N385. H404 serves as a coordination point for Zn(2+). Residues 478-501 form a helical membrane-spanning segment; it reads IITIAVVAALLLVAAIFGVASCLI. The Cytoplasmic portion of the chain corresponds to 502–537; sequence RSRSTKNEANQPLLTDHYQRYAEDYEELPNPNHSMV.

This sequence belongs to the tyrosinase family. In terms of assembly, monomer. Interacts with ATP7A. Interacts with SLC45A2. Requires Cu(2+) as cofactor. Zn(2+) serves as cofactor. Post-translationally, glycosylated. As to expression, pigment cells.

Its subcellular location is the melanosome membrane. The catalysed reaction is 2 5,6-dihydroxyindole-2-carboxylate + O2 = 2 indole-5,6-quinone-2-carboxylate + 2 H2O. It functions in the pathway pigment biosynthesis; melanin biosynthesis. Functionally, plays a role in melanin biosynthesis. Catalyzes the oxidation of 5,6-dihydroxyindole-2-carboxylic acid (DHICA) into indole-5,6-quinone-2-carboxylic acid. May regulate or influence the type of melanin synthesized. Also to a lower extent, capable of hydroxylating tyrosine and producing melanin. The polypeptide is 5,6-dihydroxyindole-2-carboxylic acid oxidase (Tyrp1) (Mus musculus (Mouse)).